Consider the following 284-residue polypeptide: Lipoyl synthase (284 aa).

[4Fe-4S] cluster contacts are provided by Cys34, Cys39, Cys45, Cys60, Cys64, Cys67, and Ser272. The Radical SAM core domain maps to 46–261 (FARRTATFMI…EEIGYKLGFK (216 aa)).

The protein belongs to the radical SAM superfamily. Lipoyl synthase family. It depends on [4Fe-4S] cluster as a cofactor.

Its subcellular location is the cytoplasm. The catalysed reaction is [[Fe-S] cluster scaffold protein carrying a second [4Fe-4S](2+) cluster] + N(6)-octanoyl-L-lysyl-[protein] + 2 oxidized [2Fe-2S]-[ferredoxin] + 2 S-adenosyl-L-methionine + 4 H(+) = [[Fe-S] cluster scaffold protein] + N(6)-[(R)-dihydrolipoyl]-L-lysyl-[protein] + 4 Fe(3+) + 2 hydrogen sulfide + 2 5'-deoxyadenosine + 2 L-methionine + 2 reduced [2Fe-2S]-[ferredoxin]. It participates in protein modification; protein lipoylation via endogenous pathway; protein N(6)-(lipoyl)lysine from octanoyl-[acyl-carrier-protein]: step 2/2. Catalyzes the radical-mediated insertion of two sulfur atoms into the C-6 and C-8 positions of the octanoyl moiety bound to the lipoyl domains of lipoate-dependent enzymes, thereby converting the octanoylated domains into lipoylated derivatives. The chain is Lipoyl synthase from Caldanaerobacter subterraneus subsp. tengcongensis (strain DSM 15242 / JCM 11007 / NBRC 100824 / MB4) (Thermoanaerobacter tengcongensis).